A 332-amino-acid chain; its full sequence is 2,3-diketo-L-gulonate reductase (332 aa).

His-44 serves as the catalytic Proton donor. NAD(+)-binding positions include 168 to 174, 224 to 225, and 304 to 306; these read ITMVDMS, WK, and GHE.

It belongs to the LDH2/MDH2 oxidoreductase family. DlgD subfamily. Homodimer.

It localises to the cytoplasm. The enzyme catalyses 3-dehydro-L-gulonate + NAD(+) = 2,3-dioxo-L-gulonate + NADH + H(+). It carries out the reaction 3-dehydro-L-gulonate + NADP(+) = 2,3-dioxo-L-gulonate + NADPH + H(+). Its function is as follows. Catalyzes the reduction of 2,3-diketo-L-gulonate in the presence of NADH, to form 3-keto-L-gulonate. This chain is 2,3-diketo-L-gulonate reductase, found in Salmonella typhi.